Consider the following 126-residue polypeptide: Aspartate 1-decarboxylase (126 aa).

Serine 25 acts as the Schiff-base intermediate with substrate; via pyruvic acid in catalysis. The residue at position 25 (serine 25) is a Pyruvic acid (Ser). Threonine 57 contributes to the substrate binding site. Tyrosine 58 (proton donor) is an active-site residue. 72–74 (GAA) is a substrate binding site.

The protein belongs to the PanD family. Heterooctamer of four alpha and four beta subunits. It depends on pyruvate as a cofactor. Is synthesized initially as an inactive proenzyme, which is activated by self-cleavage at a specific serine bond to produce a beta-subunit with a hydroxyl group at its C-terminus and an alpha-subunit with a pyruvoyl group at its N-terminus.

It localises to the cytoplasm. The catalysed reaction is L-aspartate + H(+) = beta-alanine + CO2. The protein operates within cofactor biosynthesis; (R)-pantothenate biosynthesis; beta-alanine from L-aspartate: step 1/1. Functionally, catalyzes the pyruvoyl-dependent decarboxylation of aspartate to produce beta-alanine. The sequence is that of Aspartate 1-decarboxylase from Campylobacter jejuni subsp. jejuni serotype O:23/36 (strain 81-176).